We begin with the raw amino-acid sequence, 392 residues long: 2,3-bisphosphoglycerate-independent phosphoglycerate mutase (392 aa).

Belongs to the BPG-independent phosphoglycerate mutase family. A-PGAM subfamily.

It carries out the reaction (2R)-2-phosphoglycerate = (2R)-3-phosphoglycerate. It functions in the pathway carbohydrate degradation; glycolysis; pyruvate from D-glyceraldehyde 3-phosphate: step 3/5. Functionally, catalyzes the interconversion of 2-phosphoglycerate and 3-phosphoglycerate. This is 2,3-bisphosphoglycerate-independent phosphoglycerate mutase from Methanothrix thermoacetophila (strain DSM 6194 / JCM 14653 / NBRC 101360 / PT) (Methanosaeta thermophila).